The following is a 398-amino-acid chain: Exodeoxyribonuclease 7 large subunit (398 aa).

It belongs to the XseA family. In terms of assembly, heterooligomer composed of large and small subunits.

The protein resides in the cytoplasm. It catalyses the reaction Exonucleolytic cleavage in either 5'- to 3'- or 3'- to 5'-direction to yield nucleoside 5'-phosphates.. Functionally, bidirectionally degrades single-stranded DNA into large acid-insoluble oligonucleotides, which are then degraded further into small acid-soluble oligonucleotides. This chain is Exodeoxyribonuclease 7 large subunit, found in Chlorobaculum tepidum (strain ATCC 49652 / DSM 12025 / NBRC 103806 / TLS) (Chlorobium tepidum).